The primary structure comprises 108 residues: MNTNKIAQDEVQDKVLQRAELAHSVWNLRFNLSKVAKRIRMETKVFPEIKINDAQSQLERSRCRIFSPDLEEEHVPLIQGFKCLDSPPPVPPSSSQGEDEENTVDSQY.

Positions 81–108 are disordered; sequence FKCLDSPPPVPPSSSQGEDEENTVDSQY. Residues 97–108 are compositionally biased toward acidic residues; it reads GEDEENTVDSQY.

This is an uncharacterized protein from Saccharomyces cerevisiae (strain ATCC 204508 / S288c) (Baker's yeast).